A 203-amino-acid polypeptide reads, in one-letter code: Small ribosomal subunit protein uS4c (203 aa).

The tract at residues 18 to 42 (LPGLTSKRPKNRKDSMNMNRSSSRK) is disordered. Residues 33–42 (MNMNRSSSRK) show a composition bias toward polar residues. The 62-residue stretch at 91 to 152 (MRLDNIIFRL…QPRLRAIIKK (62 aa)) folds into the S4 RNA-binding domain.

Belongs to the universal ribosomal protein uS4 family. Part of the 30S ribosomal subunit. Contacts protein S5. The interaction surface between S4 and S5 is involved in control of translational fidelity.

The protein resides in the plastid. Its subcellular location is the chloroplast. Functionally, one of the primary rRNA binding proteins, it binds directly to 16S rRNA where it nucleates assembly of the body of the 30S subunit. Its function is as follows. With S5 and S12 plays an important role in translational accuracy. This chain is Small ribosomal subunit protein uS4c (rps4), found in Pinus koraiensis (Korean pine).